The sequence spans 349 residues: UDP-3-O-acylglucosamine N-acyltransferase (349 aa).

His248 acts as the Proton acceptor in catalysis.

The protein belongs to the transferase hexapeptide repeat family. LpxD subfamily. In terms of assembly, homotrimer.

It carries out the reaction a UDP-3-O-[(3R)-3-hydroxyacyl]-alpha-D-glucosamine + a (3R)-hydroxyacyl-[ACP] = a UDP-2-N,3-O-bis[(3R)-3-hydroxyacyl]-alpha-D-glucosamine + holo-[ACP] + H(+). Its pathway is bacterial outer membrane biogenesis; LPS lipid A biosynthesis. Catalyzes the N-acylation of UDP-3-O-acylglucosamine using 3-hydroxyacyl-ACP as the acyl donor. Is involved in the biosynthesis of lipid A, a phosphorylated glycolipid that anchors the lipopolysaccharide to the outer membrane of the cell. The sequence is that of UDP-3-O-acylglucosamine N-acyltransferase from Colwellia psychrerythraea (strain 34H / ATCC BAA-681) (Vibrio psychroerythus).